Reading from the N-terminus, the 112-residue chain is Peptidyl-tRNA hydrolase (112 aa).

Belongs to the PTH2 family.

The protein resides in the cytoplasm. The enzyme catalyses an N-acyl-L-alpha-aminoacyl-tRNA + H2O = an N-acyl-L-amino acid + a tRNA + H(+). In terms of biological role, the natural substrate for this enzyme may be peptidyl-tRNAs which drop off the ribosome during protein synthesis. The sequence is that of Peptidyl-tRNA hydrolase from Methanothermobacter thermautotrophicus (strain ATCC 29096 / DSM 1053 / JCM 10044 / NBRC 100330 / Delta H) (Methanobacterium thermoautotrophicum).